We begin with the raw amino-acid sequence, 314 residues long: Citrate/oxoglutarate carrier protein (314 aa).

Solcar repeat units follow at residues 18 to 100 (VSFS…EAEY), 107 to 199 (LNNF…VEDG), and 217 to 301 (EKIG…AKEF). Helical transmembrane passes span 23-44 (ILLG…LEVV), 77-97 (IPWA…VSAE), 111-127 (ASGI…QAYL), 178-198 (VAIR…LVED), and 218-238 (KIGA…IEVI). The DNA-binding element occupies 246-259 (KEDPNRPKNLTVGK). The helical transmembrane segment at 273–294 (LYRGVTPRIGLGIWQTVFMVGF) threads the bilayer.

Belongs to the mitochondrial carrier (TC 2.A.29) family.

The protein resides in the mitochondrion inner membrane. Its subcellular location is the mitochondrion matrix. It is found in the mitochondrion nucleoid. With respect to regulation, strongly inhibited by mersalyl, p-chloromercuribenzenesulfonate, mercuric chloride, N-ethylmaleimide, pyridoxal 5'-phosphate, bathophenanthroline, and tannic acid. Partially inhibited by alpha-cyanocinnamate and bromescol purple. Weakly inhibited by butylmalonate and phenylsuccinate. Not inhibited by 1,2,3-benzenetricarboxylate or carboxyatractyloside. Its function is as follows. Mitochondrial antiporter which catalyzes the transport of citrate and oxoglutarate across the membrane. Also shows specificity for oxaloacetate, and to a lesser extent succinate and fumarate. Transports isocitrate, cis-aconitate and L-malate with very low efficiency. Does not show uniporter activity. Helps to maintain normal citrate levels and NADPH/NADP(+) ratios under conditions of oxidative stress. In addition, associates with the mitochondrial nucleoid and binds DNA in vitro, although the relevance of these data in vivo is unclear. The sequence is that of Citrate/oxoglutarate carrier protein (YHM2) from Saccharomyces cerevisiae (strain ATCC 204508 / S288c) (Baker's yeast).